Consider the following 142-residue polypeptide: MFFGEFEYKLDEKGRFPLPPAIRPSLKDGLILAPGTGEKCIYAYPLCEWKKLAESLKSTTVAPSKMRRLNRALFALAFDVNLDAQGRLTLPAPLKTYAGVNIEVIVAGVNNYLEIWDKETWESEKKASQEQAWQIIETLEEH.

2 consecutive SpoVT-AbrB domains span residues 5 to 48 and 77 to 120; these read EFEY…PLCE and AFDV…DKET.

This sequence belongs to the MraZ family. As to quaternary structure, forms oligomers.

The protein resides in the cytoplasm. Its subcellular location is the nucleoid. This Dehalococcoides mccartyi (strain ATCC BAA-2100 / JCM 16839 / KCTC 5957 / BAV1) protein is Transcriptional regulator MraZ.